The primary structure comprises 184 residues: MHKIVFVTGNKGKFAEIRDILKTFGIEVIQEKNGYPELQEDELEPIAAHGAQYVANKLNMPVMVDDSGIFINALNGFPGPYSRFVEDKLGNLKVLKMMEGEEDRTAYFKTVIGYCEPGKEPLVFPGVVEGKIAYEERGTGGFGYDPIFEYQGLTFGELGDTEKNKVSHRRRAVDEFLEWFTSKA.

Residue 8–13 (TGNKGK) participates in substrate binding. Mg(2+) contacts are provided by glutamate 37 and aspartate 66. The Proton acceptor role is filled by aspartate 66. Substrate-binding positions include serine 67, 142-145 (FGYD), lysine 163, and 168-169 (HR).

It belongs to the HAM1 NTPase family. As to quaternary structure, homodimer. Requires Mg(2+) as cofactor.

The enzyme catalyses XTP + H2O = XMP + diphosphate + H(+). It carries out the reaction dITP + H2O = dIMP + diphosphate + H(+). The catalysed reaction is ITP + H2O = IMP + diphosphate + H(+). Functionally, pyrophosphatase that catalyzes the hydrolysis of nucleoside triphosphates to their monophosphate derivatives, with a high preference for the non-canonical purine nucleotides XTP (xanthosine triphosphate), dITP (deoxyinosine triphosphate) and ITP. Seems to function as a house-cleaning enzyme that removes non-canonical purine nucleotides from the nucleotide pool, thus preventing their incorporation into DNA/RNA and avoiding chromosomal lesions. The protein is dITP/XTP pyrophosphatase of Methanosarcina acetivorans (strain ATCC 35395 / DSM 2834 / JCM 12185 / C2A).